Consider the following 236-residue polypeptide: Peptidase E (236 aa).

Active-site charge relay system residues include S122, D137, and H159.

This sequence belongs to the peptidase S51 family.

Its subcellular location is the cytoplasm. The enzyme catalyses Dipeptidase E catalyzes the hydrolysis of dipeptides Asp-|-Xaa. It does not act on peptides with N-terminal Glu, Asn or Gln, nor does it cleave isoaspartyl peptides.. Hydrolyzes dipeptides containing N-terminal aspartate residues. May play a role in allowing the cell to use peptide aspartate to spare carbon otherwise required for the synthesis of the aspartate family of amino acids. In Shewanella putrefaciens (strain CN-32 / ATCC BAA-453), this protein is Peptidase E.